Reading from the N-terminus, the 63-residue chain is Gallinacin-4 (63 aa).

The N-terminal stretch at 1-19 (MKILCFFIVLLFVAVHGAV) is a signal peptide. Residues 20-25 (GFSRSP) constitute a propeptide that is removed on maturation. 3 disulfide bridges follow: Cys-31-Cys-59, Cys-38-Cys-53, and Cys-43-Cys-60.

The protein belongs to the beta-defensin family. As to expression, strong expression in the bone marrow and testis. Widely expressed. Weak expression in the ovarian stroma, but not expressed in the ovarian follicles.

The protein resides in the secreted. It is found in the cytoplasmic granule. Functionally, has bactericidal activity. Potent activity against S.typhimurium and S.entiriditis. The protein is Gallinacin-4 (GAL4) of Gallus gallus (Chicken).